Here is a 314-residue protein sequence, read N- to C-terminus: Transcriptional regulatory protein GlnL (314 aa).

In terms of domain architecture, Response regulatory spans 2-118; that stretch reads RFFIADDDRA…EIVTVLQKVK (117 aa). 4-aspartylphosphate is present on D54.

Post-translationally, phosphorylated by GlnK.

Its subcellular location is the cytoplasm. Its function is as follows. Member of the two-component regulatory system GlnL/GlnK that positively regulates the expression of the glsA-glnT operon in response to glutamine. GlnL binds the promoter region of glsA-glnT in vitro. The chain is Transcriptional regulatory protein GlnL (glnL) from Bacillus subtilis (strain 168).